The chain runs to 100 residues: Large ribosomal subunit protein uL23 (100 aa).

The protein belongs to the universal ribosomal protein uL23 family. Part of the 50S ribosomal subunit. Contacts protein L29, and trigger factor when it is bound to the ribosome.

Functionally, one of the early assembly proteins it binds 23S rRNA. One of the proteins that surrounds the polypeptide exit tunnel on the outside of the ribosome. Forms the main docking site for trigger factor binding to the ribosome. The protein is Large ribosomal subunit protein uL23 of Bradyrhizobium diazoefficiens (strain JCM 10833 / BCRC 13528 / IAM 13628 / NBRC 14792 / USDA 110).